Reading from the N-terminus, the 156-residue chain is MIQSQHSQTARHALAETVVLAKARKNLSFAQLTDGTGLSEAFVTAALLGQHALPADAARIVADKLGLDDDAVLLLQTIPLRGSIDDRVPTDPTIYRFYEMLQVYGTTLKALVHEKFGDGIISAINFRLDVKKVDDPEGGSRAVITLDGKYLPTKPF.

Active-site residues include Arg96, Glu99, and Ser122.

Belongs to the cyanase family.

The catalysed reaction is cyanate + hydrogencarbonate + 3 H(+) = NH4(+) + 2 CO2. Catalyzes the reaction of cyanate with bicarbonate to produce ammonia and carbon dioxide. The protein is Cyanate hydratase of Burkholderia cenocepacia (strain ATCC BAA-245 / DSM 16553 / LMG 16656 / NCTC 13227 / J2315 / CF5610) (Burkholderia cepacia (strain J2315)).